Consider the following 338-residue polypeptide: S-adenosylmethionine:tRNA ribosyltransferase-isomerase (338 aa).

This sequence belongs to the QueA family. In terms of assembly, monomer.

The protein resides in the cytoplasm. It carries out the reaction 7-aminomethyl-7-carbaguanosine(34) in tRNA + S-adenosyl-L-methionine = epoxyqueuosine(34) in tRNA + adenine + L-methionine + 2 H(+). It participates in tRNA modification; tRNA-queuosine biosynthesis. In terms of biological role, transfers and isomerizes the ribose moiety from AdoMet to the 7-aminomethyl group of 7-deazaguanine (preQ1-tRNA) to give epoxyqueuosine (oQ-tRNA). This is S-adenosylmethionine:tRNA ribosyltransferase-isomerase from Francisella tularensis subsp. novicida (strain U112).